The following is a 278-amino-acid chain: Pyrroline-5-carboxylate reductase 2 (278 aa).

Belongs to the pyrroline-5-carboxylate reductase family.

The protein localises to the cytoplasm. The enzyme catalyses L-proline + NADP(+) = (S)-1-pyrroline-5-carboxylate + NADPH + 2 H(+). The catalysed reaction is L-proline + NAD(+) = (S)-1-pyrroline-5-carboxylate + NADH + 2 H(+). It functions in the pathway amino-acid biosynthesis; L-proline biosynthesis; L-proline from L-glutamate 5-semialdehyde: step 1/1. In terms of biological role, catalyzes the reduction of 1-pyrroline-5-carboxylate (PCA) to L-proline. The protein is Pyrroline-5-carboxylate reductase 2 (proI) of Bacillus subtilis (strain 168).